The chain runs to 486 residues: Achaete-scute complex protein T8 (486 aa).

2 disordered regions span residues 1-26 (MAALSFSPSPPPKENPKENPNPGIKT) and 75-158 (AAST…LPLP). Positions 75-86 (AASTTNTTPISS) are enriched in polar residues. Residues 159–223 (QAVARRNARE…RMAVEYIRSL (65 aa)) form the bHLH domain.

In terms of assembly, efficient DNA binding requires dimerization with another bHLH protein. L(1)SC, SC and AC strongly label the presumptive stomatogastric nervous system, while ASE is more prominent in the presumptive procephalic lobe.

In terms of biological role, involved in the determination of the neuronal precursors of optic lobes in the central nervous system. The chain is Achaete-scute complex protein T8 (ase) from Drosophila melanogaster (Fruit fly).